A 427-amino-acid chain; its full sequence is Glucan 1,3-beta-glucosidase 2 (427 aa).

Positions 1–17 are cleaved as a signal peptide; sequence MLISTFIISSLLSIALA. Glu-217 functions as the Proton donor in the catalytic mechanism. Intrachain disulfides connect Cys-299-Cys-426 and Cys-324-Cys-355. Glu-316 (nucleophile) is an active-site residue.

Belongs to the glycosyl hydrolase 5 (cellulase A) family.

The protein localises to the secreted. The catalysed reaction is Successive hydrolysis of beta-D-glucose units from the non-reducing ends of (1-&gt;3)-beta-D-glucans, releasing alpha-glucose.. Beta-glucanases participate in the metabolism of beta-glucan, the main structural component of the cell wall. It could also function biosynthetically as a transglycosylase. The polypeptide is Glucan 1,3-beta-glucosidase 2 (EXG2) (Wickerhamomyces anomalus (Yeast)).